The chain runs to 261 residues: Putative hydro-lyase SH0274 (261 aa).

Belongs to the D-glutamate cyclase family.

This chain is Putative hydro-lyase SH0274, found in Staphylococcus haemolyticus (strain JCSC1435).